We begin with the raw amino-acid sequence, 58 residues long: UPF0434 protein Swoo_1821 (58 aa).

The protein belongs to the UPF0434 family.

This chain is UPF0434 protein Swoo_1821, found in Shewanella woodyi (strain ATCC 51908 / MS32).